A 99-amino-acid polypeptide reads, in one-letter code: Large ribosomal subunit protein eL21 (99 aa).

The protein belongs to the eukaryotic ribosomal protein eL21 family.

In Staphylothermus marinus (strain ATCC 43588 / DSM 3639 / JCM 9404 / F1), this protein is Large ribosomal subunit protein eL21.